The chain runs to 424 residues: 3-ketoacyl-CoA thiolase, peroxisomal (424 aa).

The N-terminal 26 residues, 1-26 (MQRLQVVLGHLRGPADSGWMPQAAPC), are a transit peptide targeting the peroxisome. Residues 1-26 (MQRLQVVLGHLRGPADSGWMPQAAPC) form a PTS2-type peroxisomal targeting signal region. Phosphothreonine occurs at positions 59 and 60. C123 functions as the Acyl-thioester intermediate in the catalytic mechanism. Catalysis depends on proton acceptor residues H377 and C408.

This sequence belongs to the thiolase-like superfamily. Thiolase family. In terms of assembly, homodimer. Interacts (via PTS2-type peroxisomal targeting signal region) with PEX7; leading to its translocation into peroxisomes.

It localises to the peroxisome. The enzyme catalyses an acyl-CoA + acetyl-CoA = a 3-oxoacyl-CoA + CoA. It carries out the reaction 2 acetyl-CoA = acetoacetyl-CoA + CoA. The catalysed reaction is tetradecanoyl-CoA + acetyl-CoA = 3-oxohexadecanoyl-CoA + CoA. It catalyses the reaction hexanoyl-CoA + acetyl-CoA = 3-oxooctanoyl-CoA + CoA. The enzyme catalyses 3-oxohexadecanedioyl-CoA + CoA = tetradecanedioyl-CoA + acetyl-CoA. It carries out the reaction 3-oxo-(6Z,9Z,12Z,15Z,18Z,21Z)-tetracosahexaenoyl-CoA + CoA = (4Z,7Z,10Z,13Z,16Z,19Z)-docosahexaenoyl-CoA + acetyl-CoA. It functions in the pathway lipid metabolism; peroxisomal fatty acid beta-oxidation. Functionally, responsible for the thiolytic cleavage of straight chain 3-keto fatty acyl-CoAs (3-oxoacyl-CoAs). Plays an important role in fatty acid peroxisomal beta-oxidation. Catalyzes the cleavage of short, medium, long, and very long straight chain 3-oxoacyl-CoAs. This is 3-ketoacyl-CoA thiolase, peroxisomal from Homo sapiens (Human).